A 253-amino-acid polypeptide reads, in one-letter code: H repeat-associated putative transposase YbfD (253 aa).

Belongs to the transposase 11 family.

The sequence is that of H repeat-associated putative transposase YbfD (ybfD) from Escherichia coli (strain K12).